The following is a 339-amino-acid chain: Phenylalanine--tRNA ligase alpha subunit (339 aa).

E254 lines the Mg(2+) pocket.

This sequence belongs to the class-II aminoacyl-tRNA synthetase family. Phe-tRNA synthetase alpha subunit type 1 subfamily. Tetramer of two alpha and two beta subunits. It depends on Mg(2+) as a cofactor.

It is found in the cytoplasm. It carries out the reaction tRNA(Phe) + L-phenylalanine + ATP = L-phenylalanyl-tRNA(Phe) + AMP + diphosphate + H(+). The polypeptide is Phenylalanine--tRNA ligase alpha subunit (Clostridium novyi (strain NT)).